A 30-amino-acid polypeptide reads, in one-letter code: Photosystem I reaction center subunit XII (30 aa).

The helical transmembrane segment at S5 to G25 threads the bilayer.

The protein belongs to the PsaM family.

It is found in the plastid. The protein localises to the chloroplast thylakoid membrane. In Emiliania huxleyi (Coccolithophore), this protein is Photosystem I reaction center subunit XII.